The chain runs to 504 residues: Probable ergothioneine transporter EgtUBC (504 aa).

An ABC transmembrane type-1 domain is found at 19–198 (MIEHIQISFI…LLAIIFDLIL (180 aa)). 6 consecutive transmembrane segments (helical) span residues 25–45 (ISFI…ILLT), 49–69 (TISE…SLAL), 70–90 (LGLM…ALVV), 145–165 (AMVL…GGLG), 178–198 (SLIL…DLIL), and 209–229 (LLMT…IPMF). Positions 231-504 (QKGDKITLAG…DYLKAKGLIK (274 aa)) are ergothioneine binding domain.

This sequence in the N-terminal section; belongs to the binding-protein-dependent transport system permease family. It in the C-terminal section; belongs to the OsmX family. In terms of assembly, the complex is probably composed of at least an ATP-binding protein (EgtUA) and a transmembrane protein (EgtUBC).

The protein resides in the membrane. Functionally, part of an ABC transporter complex EgtU required for the uptake of ergothioneine (EGT), a natural low-molecular weight (LMW) thiol antioxidant. Responsible for the translocation of the substrate across the membrane. Also contains a C-terminal periplasmic solute-binding domain (SBD) which binds to EGT with sub-micromolar affinity. Probably does not bind L-hercynine. This is Probable ergothioneine transporter EgtUBC (egtUBC) from Staphylococcus aureus (strain USA300).